Here is a 550-residue protein sequence, read N- to C-terminus: MTKQYERKAKGGNLLSAFELYQRNTDNMPGLGEMLVDEWFETCRDYIQDGHVDESGTFRPDNAFYLRRLTLKDFRRFSLLEIKFEEDLTVIIGNNGKGKTSILYAIAKTLSWFVANILKEGGSGQRLSELTDIKNDAENRYADVSSTFFFGKGLKSVPIRLSRSALGTAERRDSEVKPARDLADIWRVINEAKTINLPTFALYNVERSQPFNRNTKDNAGRREERFDAYSQALGGAGRFDHFVEWYIYLHKRTISDISSSIKELEQQVNDLQRSVDGGMVSVKSLLEQMKLKLSEASERNDAAVSSKMVTESVQKSIVEKSICSVVPSISKIWVEMTTGSDLVKVTNDGHDVTIDQLSDGQRVFLSLVADLARRMVMLNPLLENPLEGRGIVLIDEIELHLHPKWQQEVILNLRSVFPNIQFIITTHSPIVLSTIEKRCIREFDPNDDGNQSFLDSPDMQTKGSENAQILEQVMNVHPTPPGIAESHWLGDFELLLLDNSGELDNQSQELYDKIKTHFGIDSAELKKADSLIRINKMKNKINKIRAEKGK.

The short motif at 93–100 (GNNGKGKT) is the ATP-binding element.

Functionally, probable ATPase component of antiviral defense system retron Ec78, composed of a non-coding RNA (ncRNA), a reverse transcriptase (RT), this protein and a putative HNH endonuclease. Expression of retron Ec78 confers protection against bacteriophage T5. At multiplicity of infection (MOI) of 0.02 cultures slow growth when infected with T5 but do not collapse, at MOI 2 cultures enter growth stasis. The polypeptide is Retron Ec78 probable ATPase (Escherichia coli).